Reading from the N-terminus, the 297-residue chain is Phosphatidylglycerol--prolipoprotein diacylglyceryl transferase (297 aa).

Helical transmembrane passes span 20–40 (FLTI…GLFV), 50–70 (INPL…IIGA), 105–125 (AVWE…LSII), and 133–153 (IHLK…QSIG). Arg-154 contacts a 1,2-diacyl-sn-glycero-3-phospho-(1'-sn-glycerol). The next 3 membrane-spanning stretches (helical) occupy residues 193–213 (PTFL…IFVF), 225–245 (GFIS…IEGL), and 266–286 (AQFI…FLRL).

It belongs to the Lgt family.

The protein resides in the cell inner membrane. The enzyme catalyses L-cysteinyl-[prolipoprotein] + a 1,2-diacyl-sn-glycero-3-phospho-(1'-sn-glycerol) = an S-1,2-diacyl-sn-glyceryl-L-cysteinyl-[prolipoprotein] + sn-glycerol 1-phosphate + H(+). It participates in protein modification; lipoprotein biosynthesis (diacylglyceryl transfer). Functionally, catalyzes the transfer of the diacylglyceryl group from phosphatidylglycerol to the sulfhydryl group of the N-terminal cysteine of a prolipoprotein, the first step in the formation of mature lipoproteins. This Prochlorococcus marinus (strain MIT 9312) protein is Phosphatidylglycerol--prolipoprotein diacylglyceryl transferase.